Reading from the N-terminus, the 72-residue chain is Thiostrepton (72 aa).

Residues 1-55 (MDATAIHERWSVMSNASIGQEIGVEGLTGLDVDALEISDYVDETLLDGEDLTVTM) constitute a propeptide that is removed on maturation. Positions 56-67 (IASASCTTCICT) form a cross-link, 4-(1-hydroxyethyl)-7-isoleucino-2-(threonin-O3-ylcarbonyl)-7,8-dihydroquinolin-8-ol (Ile-Thr). Serine 58 is modified (2,3-didehydroalanine (Ser)). Residues 60 to 61 (SC) constitute a cross-link (thiazole-4-carboxylic acid (Ser-Cys)). The 5-amino-piperideine-2,5-dicarboxylic acid (Ser-Cys) (with S-69) cross-link spans 60 to 68 (SCTTCICTC). The 5-amino-piperideine-2,5-dicarboxylic acid (Ser-Ser) (with C-68) cross-link spans 60-69 (SCTTCICTCS). Threonine 63 bears the (Z)-2,3-didehydrobutyrine mark. The (4S)-thiazoline-4-carboxylic acid (Thr-Cys) cross-link spans 63–64 (TC). Isoleucine 65 carries the post-translational modification (3S,4R)-3,4-dihydroxyisoleucine. Positions 65–66 (IC) form a cross-link, thiazole-4-carboxylic acid (Ile-Cys). Residues 67–68 (TC) constitute a cross-link (thiazole-4-carboxylic acid (Thr-Cys)). Positions 69 to 70 (SC) form a cross-link, thiazole-4-carboxylic acid (Ser-Cys). 2 positions are modified to 2,3-didehydroalanine (Ser): serine 71 and serine 72. Serine 72 is subject to Serine amide.

The protein belongs to the thiocillin family. In terms of processing, maturation of thiazole and oxazole containing antibiotics involves the enzymatic condensation of a Cys, Ser or Thr with the alpha-carbonyl of the preceding amino acid to form a thioether or ether bond, then dehydration to form a double bond with the alpha-amino nitrogen. Thiazoline or oxazoline ring are dehydrogenated to form thiazole or oxazole rings. Post-translationally, maturation of pyridinyl containing antibiotics involves the cross-linking of a Ser and a Cys-Ser pair usually separated by 7 or 8 residues along the peptide chain. The Ser residues are dehydrated to didehydroalanines, then bonded between their beta carbons. The alpha carbonyl of the Cys condenses with alpha carbon of the first Ser to form a pyridinyl ring. The ring may be multiply dehydrogenated to form a pyridine ring with loss of the amino nitrogen of the first Ser. The amidation of Ser-72 probably does not occur by the same mechanism, oxidative cleavage of glycine, as in eukaryotes. In terms of processing, the structure of the 2,3-didehydrobutyrin is shown to be Z-isomer.

It is found in the secreted. Has bacteriocidal activity. Inhibits bacterial protein biosynthesis by acting on the elongation factor Tu (EF-Tu). This is Thiostrepton (tpdA) from Streptomyces azureus.